A 347-amino-acid polypeptide reads, in one-letter code: MAEITAKLVKELREKSGAGVMDAKKALVETDGDIEKAIELLREKGMAKAAKKADRVAAEGLTGVYVNGNVAAVVEVNAETDFVAKNAQFVDLVNATAKVIAEGKPANNEEALALTMPSGETLEAAYVSATATIGEKISFRRFALIEKTDAQHFGAYQHNGGRIGVISVIEGGDEALAKQISMHIAAMKPTVLSYKELDEQFVKDELAQLNHAIDQDNESRAMVGKPALPHLKYGSKAQLTDAVVAQAEEDIKAELAAEGKPEKIWDKIIPGKMDRFMLDNTKVDQAYTLLAQVYIMDDSKTVEAYLESVNASVVEFARFEVGEGIEKAANDFESEVAATMAAALGQN.

The tract at residues Thr-80–Val-83 is involved in Mg(2+) ion dislocation from EF-Tu.

Belongs to the EF-Ts family.

The protein localises to the cytoplasm. Functionally, associates with the EF-Tu.GDP complex and induces the exchange of GDP to GTP. It remains bound to the aminoacyl-tRNA.EF-Tu.GTP complex up to the GTP hydrolysis stage on the ribosome. The protein is Elongation factor Ts of Streptococcus gordonii (strain Challis / ATCC 35105 / BCRC 15272 / CH1 / DL1 / V288).